The primary structure comprises 457 residues: uncharacterized protein (457 aa).

2 helical membrane passes run M1 to L21 and I250 to F270.

The protein resides in the membrane. This is an uncharacterized protein from Saccharomyces cerevisiae (strain ATCC 204508 / S288c) (Baker's yeast).